Consider the following 478-residue polypeptide: UDP-N-acetylmuramate--L-alanine ligase (478 aa).

122-128 contacts ATP; it reads GTHGKTT.

This sequence belongs to the MurCDEF family.

The protein localises to the cytoplasm. The enzyme catalyses UDP-N-acetyl-alpha-D-muramate + L-alanine + ATP = UDP-N-acetyl-alpha-D-muramoyl-L-alanine + ADP + phosphate + H(+). Its pathway is cell wall biogenesis; peptidoglycan biosynthesis. In terms of biological role, cell wall formation. This chain is UDP-N-acetylmuramate--L-alanine ligase, found in Stenotrophomonas maltophilia (strain R551-3).